Here is a 406-residue protein sequence, read N- to C-terminus: Imidazolonepropionase (406 aa).

His-74 and His-76 together coordinate Fe(3+). Zn(2+) contacts are provided by His-74 and His-76. Positions 83, 146, and 179 each coordinate 4-imidazolone-5-propanoate. N-formimidoyl-L-glutamate is bound at residue Tyr-146. Residue His-240 participates in Fe(3+) binding. His-240 is a binding site for Zn(2+). 4-imidazolone-5-propanoate is bound at residue Glu-243. Residue Asp-314 participates in Fe(3+) binding. Asp-314 contacts Zn(2+). N-formimidoyl-L-glutamate is bound by residues Asn-316 and Gly-318. Ser-319 serves as a coordination point for 4-imidazolone-5-propanoate.

Belongs to the metallo-dependent hydrolases superfamily. HutI family. Requires Zn(2+) as cofactor. It depends on Fe(3+) as a cofactor.

The protein resides in the cytoplasm. The enzyme catalyses 4-imidazolone-5-propanoate + H2O = N-formimidoyl-L-glutamate. It functions in the pathway amino-acid degradation; L-histidine degradation into L-glutamate; N-formimidoyl-L-glutamate from L-histidine: step 3/3. In terms of biological role, catalyzes the hydrolytic cleavage of the carbon-nitrogen bond in imidazolone-5-propanoate to yield N-formimidoyl-L-glutamate. It is the third step in the universal histidine degradation pathway. This chain is Imidazolonepropionase, found in Kosmotoga olearia (strain ATCC BAA-1733 / DSM 21960 / TBF 19.5.1).